We begin with the raw amino-acid sequence, 558 residues long: Glucose-6-phosphate isomerase (558 aa).

At Ala2 the chain carries N-acetylalanine. N6-acetyllysine is present on Lys12. Position 34 is an N6-(2-hydroxyisobutyryl)lysine (Lys34). Position 107 is a phosphoserine (Ser107). Thr109 carries the post-translational modification Phosphothreonine. At Lys142 the chain carries N6-acetyllysine. 159–160 (GS) contacts D-glucose 6-phosphate. Ser185 carries the phosphoserine; by CK2 modification. A D-glucose 6-phosphate-binding site is contributed by 210-215 (SKTFTT). The residue at position 250 (Thr250) is a Phosphothreonine. Positions 354, 358, and 389 each coordinate D-glucose 6-phosphate. Residue Glu358 is the Proton donor of the active site. His389 is a catalytic residue. At Lys454 the chain carries N6-acetyllysine; alternate. The residue at position 454 (Lys454) is an N6-malonyllysine; alternate. N6-succinyllysine; alternate is present on Lys454. Ser455 carries the post-translational modification Phosphoserine. Lys519 contributes to the D-glucose 6-phosphate binding site. Lys519 is an active-site residue.

This sequence belongs to the GPI family. In terms of assembly, homodimer in the catalytically active form, monomer in the secreted form. In terms of processing, phosphorylation at Ser-185 by CK2 has been shown to decrease enzymatic activity and may contribute to secretion by a non-classical secretory pathway. Post-translationally, ISGylated.

The protein localises to the cytoplasm. It localises to the secreted. The catalysed reaction is alpha-D-glucose 6-phosphate = beta-D-fructose 6-phosphate. It functions in the pathway carbohydrate degradation; glycolysis; D-glyceraldehyde 3-phosphate and glycerone phosphate from D-glucose: step 2/4. In terms of biological role, in the cytoplasm, catalyzes the conversion of glucose-6-phosphate to fructose-6-phosphate, the second step in glycolysis, and the reverse reaction during gluconeogenesis. Besides it's role as a glycolytic enzyme, also acts as a secreted cytokine: acts as an angiogenic factor (AMF) that stimulates endothelial cell motility. Acts as a neurotrophic factor, neuroleukin, for spinal and sensory neurons. It is secreted by lectin-stimulated T-cells and induces immunoglobulin secretion. The chain is Glucose-6-phosphate isomerase from Sus scrofa (Pig).